The following is a 652-amino-acid chain: DNA ligase (652 aa).

NAD(+) contacts are provided by residues 29-33, 78-79, and Glu107; these read DSDYD and SL. Lys109 (N6-AMP-lysine intermediate) is an active-site residue. NAD(+) is bound by residues Arg130, Glu164, Lys278, and Lys302. 4 residues coordinate Zn(2+): Cys395, Cys398, Cys413, and Cys418. Residues 577–652 form the BRCT domain; that stretch reads NSDAALFGLT…IEDEDWLRQL (76 aa).

The protein belongs to the NAD-dependent DNA ligase family. LigA subfamily. Mg(2+) is required as a cofactor. Requires Mn(2+) as cofactor.

The catalysed reaction is NAD(+) + (deoxyribonucleotide)n-3'-hydroxyl + 5'-phospho-(deoxyribonucleotide)m = (deoxyribonucleotide)n+m + AMP + beta-nicotinamide D-nucleotide.. Functionally, DNA ligase that catalyzes the formation of phosphodiester linkages between 5'-phosphoryl and 3'-hydroxyl groups in double-stranded DNA using NAD as a coenzyme and as the energy source for the reaction. It is essential for DNA replication and repair of damaged DNA. The protein is DNA ligase of Streptococcus pyogenes serotype M4 (strain MGAS10750).